The sequence spans 77 residues: Translation initiation factor IF-1, chloroplastic (77 aa).

Positions 1-71 constitute an S1-like domain; that stretch reads MKEQKWTHEG…TRGRIIYRLR (71 aa).

Belongs to the IF-1 family. Component of the 30S ribosomal translation pre-initiation complex which assembles on the 30S ribosome in the order IF-2 and IF-3, IF-1 and N-formylmethionyl-tRNA(fMet); mRNA recruitment can occur at any time during PIC assembly.

It is found in the plastid. The protein resides in the chloroplast. One of the essential components for the initiation of protein synthesis. Stabilizes the binding of IF-2 and IF-3 on the 30S subunit to which N-formylmethionyl-tRNA(fMet) subsequently binds. Helps modulate mRNA selection, yielding the 30S pre-initiation complex (PIC). Upon addition of the 50S ribosomal subunit IF-1, IF-2 and IF-3 are released leaving the mature 70S translation initiation complex. This is Translation initiation factor IF-1, chloroplastic from Coffea arabica (Arabian coffee).